A 983-amino-acid chain; its full sequence is ABC transporter A family member 2 (983 aa).

Helical transmembrane passes span 33–53 (FLQL…QAAM), 221–241 (IVAL…FGFV), 279–299 (ILTA…QFDF), 305–325 (FPVV…LAFM), 339–359 (VGFF…SGFP), and 416–436 (VLTI…WFVL). The ABC transporter domain maps to 518-763 (VQIRGLAKTY…FGTGFIANIS (246 aa)). Residue 564-571 (GPNGAGKT) participates in ATP binding. The disordered stretch occupies residues 963-983 (RSGSTSSRRFSRSGSSRRFSS).

The protein belongs to the ABC transporter superfamily. ABCA family. CPR flippase (TC 3.A.1.211) subfamily.

It is found in the membrane. In Arabidopsis thaliana (Mouse-ear cress), this protein is ABC transporter A family member 2 (ABCA2).